The following is a 118-amino-acid chain: Basic phospholipase A2 homolog 1 (118 aa).

7 disulfide bridges follow: Cys-11/Cys-71, Cys-27/Cys-117, Cys-29/Cys-45, Cys-44/Cys-98, Cys-51/Cys-91, Cys-60/Cys-84, and Cys-78/Cys-89. An important for membrane-damaging activities in eukaryotes and bacteria; heparin-binding region spans residues 106–118 (NKNFNIDTKKRCK).

It belongs to the phospholipase A2 family. Group I subfamily. D49 sub-subfamily. As to expression, expressed by the venom gland.

Its subcellular location is the secreted. The sequence is that of Basic phospholipase A2 homolog 1 from Laticauda colubrina (Yellow-lipped sea krait).